Consider the following 350-residue polypeptide: Methylthioribose-1-phosphate isomerase (350 aa).

Catalysis depends on D241, which acts as the Proton donor.

Belongs to the eIF-2B alpha/beta/delta subunits family. MtnA subfamily.

It is found in the cytoplasm. The protein resides in the nucleus. The enzyme catalyses 5-(methylsulfanyl)-alpha-D-ribose 1-phosphate = 5-(methylsulfanyl)-D-ribulose 1-phosphate. It functions in the pathway amino-acid biosynthesis; L-methionine biosynthesis via salvage pathway; L-methionine from S-methyl-5-thio-alpha-D-ribose 1-phosphate: step 1/6. Catalyzes the interconversion of methylthioribose-1-phosphate (MTR-1-P) into methylthioribulose-1-phosphate (MTRu-1-P). The sequence is that of Methylthioribose-1-phosphate isomerase from Nematostella vectensis (Starlet sea anemone).